An 84-amino-acid chain; its full sequence is ATP synthase subunit c (84 aa).

2 helical membrane-spanning segments follow: residues 21–38 (ALGA…IGKI) and 60–80 (MIII…VCLL).

It belongs to the ATPase C chain family. As to quaternary structure, F-type ATPases have 2 components, F(1) - the catalytic core - and F(0) - the membrane proton channel. F(1) has five subunits: alpha(3), beta(3), gamma(1), delta(1), epsilon(1). F(0) has three main subunits: a(1), b(2) and c(10-14). The alpha and beta chains form an alternating ring which encloses part of the gamma chain. F(1) is attached to F(0) by a central stalk formed by the gamma and epsilon chains, while a peripheral stalk is formed by the delta and b chains.

It localises to the cell inner membrane. Functionally, f(1)F(0) ATP synthase produces ATP from ADP in the presence of a proton or sodium gradient. F-type ATPases consist of two structural domains, F(1) containing the extramembraneous catalytic core and F(0) containing the membrane proton channel, linked together by a central stalk and a peripheral stalk. During catalysis, ATP synthesis in the catalytic domain of F(1) is coupled via a rotary mechanism of the central stalk subunits to proton translocation. Key component of the F(0) channel; it plays a direct role in translocation across the membrane. A homomeric c-ring of between 10-14 subunits forms the central stalk rotor element with the F(1) delta and epsilon subunits. This Phocaeicola vulgatus (strain ATCC 8482 / DSM 1447 / JCM 5826 / CCUG 4940 / NBRC 14291 / NCTC 11154) (Bacteroides vulgatus) protein is ATP synthase subunit c.